The primary structure comprises 318 residues: NADH-ubiquinone oxidoreductase chain 1 (318 aa).

8 helical membrane-spanning segments follow: residues 2–22 (FTIN…FLTL), 70–90 (MFII…IPLP), 100–120 (LGVL…LWSG), 146–166 (LAII…STLI), 171–191 (HLWL…STLA), 222–242 (LFFM…TILF), 254–276 (LYTI…IRAS), and 294–314 (LPLT…TSSI).

Belongs to the complex I subunit 1 family. As to quaternary structure, core subunit of respiratory chain NADH dehydrogenase (Complex I) which is composed of 45 different subunits.

The protein localises to the mitochondrion inner membrane. The catalysed reaction is a ubiquinone + NADH + 5 H(+)(in) = a ubiquinol + NAD(+) + 4 H(+)(out). In terms of biological role, core subunit of the mitochondrial membrane respiratory chain NADH dehydrogenase (Complex I) which catalyzes electron transfer from NADH through the respiratory chain, using ubiquinone as an electron acceptor. Essential for the catalytic activity and assembly of complex I. The polypeptide is NADH-ubiquinone oxidoreductase chain 1 (MT-ND1) (Ceratotherium simum (White rhinoceros)).